The chain runs to 106 residues: Large ribosomal subunit protein bL31B (106 aa).

The disordered stretch occupies residues 85–106 (PVQVAEEPVAKGKKKPSLKKKK). The segment covering 95–106 (KGKKKPSLKKKK) has biased composition (basic residues).

Belongs to the bacterial ribosomal protein bL31 family. Type B subfamily. Part of the 50S ribosomal subunit.

The polypeptide is Large ribosomal subunit protein bL31B (Chlamydia felis (strain Fe/C-56) (Chlamydophila felis)).